We begin with the raw amino-acid sequence, 102 residues long: Defensin-like protein 285 (102 aa).

An N-terminal signal peptide occupies residues 1–28; sequence MTNLYFKTAFLLSLLLLSFSYQSKLIEA. Cystine bridges form between Cys-39/Cys-100, Cys-64/Cys-83, Cys-70/Cys-88, and Cys-75/Cys-90.

It belongs to the DEFL family.

The protein resides in the secreted. This is Defensin-like protein 285 from Arabidopsis thaliana (Mouse-ear cress).